Reading from the N-terminus, the 160-residue chain is uncharacterized protein (160 aa).

The region spanning 5-160 (ISLSFYKPEH…GEQLILHHFL (156 aa)) is the N-acetyltransferase domain.

This is an uncharacterized protein from Bacillus subtilis (strain 168).